The sequence spans 182 residues: Ribosome-recycling factor (182 aa).

The disordered stretch occupies residues 136 to 156; the sequence is IRKQEKNSDISKDESRDLQDK.

This sequence belongs to the RRF family.

Its subcellular location is the cytoplasm. In terms of biological role, responsible for the release of ribosomes from messenger RNA at the termination of protein biosynthesis. May increase the efficiency of translation by recycling ribosomes from one round of translation to another. The chain is Ribosome-recycling factor from Trichodesmium erythraeum (strain IMS101).